The primary structure comprises 409 residues: 5-aminolevulinate synthase (409 aa).

The succinyl-CoA site is built by Arg-21, Ser-137, and Lys-156. Residues Ser-189, His-217, and Thr-245 each contribute to the pyridoxal 5'-phosphate site. The active site involves Lys-248. Position 248 is an N6-(pyridoxal phosphate)lysine (Lys-248). Residues Ser-277 and Thr-278 each coordinate pyridoxal 5'-phosphate. Thr-365 is a binding site for succinyl-CoA.

This sequence belongs to the class-II pyridoxal-phosphate-dependent aminotransferase family. In terms of assembly, homodimer. Pyridoxal 5'-phosphate is required as a cofactor.

It carries out the reaction succinyl-CoA + glycine + H(+) = 5-aminolevulinate + CO2 + CoA. It participates in porphyrin-containing compound metabolism; protoporphyrin-IX biosynthesis; 5-aminolevulinate from glycine: step 1/1. The polypeptide is 5-aminolevulinate synthase (hemA) (Rhodobacter capsulatus (strain ATCC BAA-309 / NBRC 16581 / SB1003)).